The following is a 368-amino-acid chain: Spermidine/putrescine import ATP-binding protein PotA (368 aa).

Residues 8–238 (IELKNVSKIF…PVNLFVARFV (231 aa)) enclose the ABC transporter domain. Residue 40-47 (GPSGCGKT) coordinates ATP.

The protein belongs to the ABC transporter superfamily. Spermidine/putrescine importer (TC 3.A.1.11.1) family. As to quaternary structure, the complex is composed of two ATP-binding proteins (PotA), two transmembrane proteins (PotB and PotC) and a solute-binding protein (PotD).

The protein resides in the cell membrane. The enzyme catalyses ATP + H2O + polyamine-[polyamine-binding protein]Side 1 = ADP + phosphate + polyamineSide 2 + [polyamine-binding protein]Side 1.. Part of the ABC transporter complex PotABCD involved in spermidine/putrescine import. Responsible for energy coupling to the transport system. The sequence is that of Spermidine/putrescine import ATP-binding protein PotA from Lawsonia intracellularis (strain PHE/MN1-00).